We begin with the raw amino-acid sequence, 189 residues long: Interleukin-23 subunit alpha (189 aa).

A signal peptide spans 1 to 19; sequence MLGSRAVMLLLLLPWTAQG. An intrachain disulfide couples cysteine 77 to cysteine 89.

The protein belongs to the IL-6 superfamily. As to quaternary structure, heterodimer with IL12B; disulfide-linked. The heterodimer is known as interleukin IL-23. Interacts with IL23R; this interaction enables recruitment of IL12RB1. In terms of tissue distribution, secreted by activated dendritic and phagocytic cells and keratinocytes. Also expressed by dermal Langerhans cells (at protein level).

The protein localises to the secreted. Functionally, associates with IL12B to form the pro-inflammatory cytokine IL-23 that plays different roles in innate and adaptive immunity. Released by antigen-presenting cells such as dendritic cells or macrophages, binds to a heterodimeric receptor complex composed of IL12RB1 and IL23R to activate JAK2 and TYK2 which then phosphorylate the receptor to form a docking site leading to the phosphorylation of STAT3 and STAT4. This process leads to activation of several pathways including p38 MAPK or NF-kappa-B and promotes the production of pro-inflammatory cytokines such as interleukin-17A/IL17A. In turn, participates in the early and effective intracellular bacterial clearance. Promotes the expansion and survival of T-helper 17 cells, a CD4-positive helper T-cell subset that produces IL-17, as well as other IL-17-producing cells. This is Interleukin-23 subunit alpha (IL23A) from Homo sapiens (Human).